The following is a 263-amino-acid chain: Triosephosphate isomerase (263 aa).

10–12 lines the substrate pocket; that stretch reads NWK. The active-site Electrophile is His-104. The active-site Proton acceptor is the Glu-176. Substrate is bound by residues Gly-182, Ser-221, and 242-243; that span reads GG.

Belongs to the triosephosphate isomerase family. As to quaternary structure, homodimer.

The protein localises to the cytoplasm. It catalyses the reaction D-glyceraldehyde 3-phosphate = dihydroxyacetone phosphate. The protein operates within carbohydrate biosynthesis; gluconeogenesis. It functions in the pathway carbohydrate degradation; glycolysis; D-glyceraldehyde 3-phosphate from glycerone phosphate: step 1/1. Functionally, involved in the gluconeogenesis. Catalyzes stereospecifically the conversion of dihydroxyacetone phosphate (DHAP) to D-glyceraldehyde-3-phosphate (G3P). The protein is Triosephosphate isomerase of Haemophilus influenzae (strain PittEE).